The sequence spans 386 residues: Heat-inducible transcription repressor HrcA (386 aa).

This sequence belongs to the HrcA family.

Negative regulator of class I heat shock genes (grpE-dnaK-dnaJ and groELS operons). Prevents heat-shock induction of these operons. The chain is Heat-inducible transcription repressor HrcA from Chlamydia caviae (strain ATCC VR-813 / DSM 19441 / 03DC25 / GPIC) (Chlamydophila caviae).